Reading from the N-terminus, the 286-residue chain is S-methyl-5'-thioadenosine phosphorylase (286 aa).

Phosphate contacts are provided by residues S11, 53–54 (RH), and 86–87 (SA). A substrate-binding site is contributed by M185. T186 contacts phosphate. Position 209-211 (209-211 (DYD)) interacts with substrate.

Belongs to the PNP/MTAP phosphorylase family. MTAP subfamily. In terms of assembly, homohexamer. Dimer of a homotrimer.

The catalysed reaction is S-methyl-5'-thioadenosine + phosphate = 5-(methylsulfanyl)-alpha-D-ribose 1-phosphate + adenine. Its pathway is amino-acid biosynthesis; L-methionine biosynthesis via salvage pathway; S-methyl-5-thio-alpha-D-ribose 1-phosphate from S-methyl-5'-thioadenosine (phosphorylase route): step 1/1. Functionally, catalyzes the reversible phosphorylation of S-methyl-5'-thioadenosine (MTA) to adenine and 5-methylthioribose-1-phosphate. Involved in the breakdown of MTA, a major by-product of polyamine biosynthesis. Responsible for the first step in the methionine salvage pathway after MTA has been generated from S-adenosylmethionine. Has broad substrate specificity with 6-aminopurine nucleosides as preferred substrates. This chain is S-methyl-5'-thioadenosine phosphorylase, found in Geobacter sulfurreducens (strain ATCC 51573 / DSM 12127 / PCA).